The chain runs to 530 residues: Pentatricopeptide repeat-containing protein At3g51320 (530 aa).

PPR repeat units lie at residues 82-116 (KLYC…GFVP), 117-151 (DSYT…GCDQ), 152-182 (VLPV…IPKR), 183-217 (DIVS…NIIS), 218-248 (WNIM…GFQG), 249-283 (NEST…FLNS), 284-314 (SVVI…LSIR), 315-349 (NKVT…MLRP), 350-380 (DEVT…MVDE), and 386-420 (NFGH…DVTP). Positions 424 to 499 (KWANLLSSSR…IPGCGLVDLK (76 aa)) are type E motif.

This sequence belongs to the PPR family. PCMP-E subfamily.

In Arabidopsis thaliana (Mouse-ear cress), this protein is Pentatricopeptide repeat-containing protein At3g51320.